The sequence spans 713 residues: TWiK family of potassium channels protein 12 (713 aa).

Topologically, residues 1–15 are cytoplasmic; it reads MTLFKKIQWFCNLIR. The chain crosses the membrane as a helical span at residues 16–36; that stretch reads LRSYYKFLLLIAYTAFGAWLF. 3 N-linked (GlcNAc...) asparagine glycosylation sites follow: Asn-53, Asn-77, and Asn-98. An intramembrane region (pore-forming) is located at residues 112 to 132; that stretch reads WTWTGAMFYAGQLYTTIGYGY. A helical transmembrane segment spans residues 142–162; that stretch reads ICTIFYALFGIPCFLMYLKIE. Over 163–242 the chain is Cytoplasmic; the sequence is NAIEWKKDKQ…AEERKKKPFP (80 aa). Residues 243-263 form a helical membrane-spanning segment; that stretch reads IPIAIIMLIIWICFSASMFCI. An intramembrane region (pore-forming) is located at residues 267 to 287; sequence TWVFSSAVYFFIVSISTVGLG. A helical membrane pass occupies residues 298–318; that stretch reads VFNFLLILVGLALLSMCFELI. The Cytoplasmic portion of the chain corresponds to 319–713; the sequence is TDRVAKWKQK…LSKRDASTMA (395 aa).

The protein belongs to the two pore domain potassium channel (TC 1.A.1.8) family.

Its subcellular location is the membrane. The protein is TWiK family of potassium channels protein 12 (twk-12) of Caenorhabditis elegans.